The primary structure comprises 208 residues: Negative modulator of initiation of replication (208 aa).

Residues 115–116 (AV) are interaction with DNA.

This sequence belongs to the SeqA family. Homodimer. Polymerizes to form helical filaments.

It is found in the cytoplasm. In terms of biological role, negative regulator of replication initiation, which contributes to regulation of DNA replication and ensures that replication initiation occurs exactly once per chromosome per cell cycle. Binds to pairs of hemimethylated GATC sequences in the oriC region, thus preventing assembly of replication proteins and re-initiation at newly replicated origins. Repression is relieved when the region becomes fully methylated. The polypeptide is Negative modulator of initiation of replication (Shewanella frigidimarina (strain NCIMB 400)).